The chain runs to 515 residues: RNA exonuclease NGL2 (515 aa).

2 disordered regions span residues 1–54 and 353–381; these read MTQD…SKPI and RDGE…PVPE. Over residues 21–34 the composition is skewed to basic and acidic residues; the sequence is EINKSVKDAKHQTN. The span at 40–52 shows a compositional bias: basic residues; that stretch reads QHKKKGKKGKKSK. The segment covering 369–381 has biased composition (basic and acidic residues); that stretch reads KYGKDQPESPVPE.

The protein belongs to the CCR4/nocturin family.

It is found in the cytoplasm. The protein localises to the nucleus. In terms of biological role, involved in pre-rRNA processing. Required for the final stage of 3'-end maturation of 5.8S rRNA at site E. The sequence is that of RNA exonuclease NGL2 (NGL2) from Saccharomyces cerevisiae (strain ATCC 204508 / S288c) (Baker's yeast).